Consider the following 203-residue polypeptide: 2-hydroxychromene-2-carboxylate isomerase (203 aa).

The active-site Nucleophile is serine 11. A glutathione-binding site is contributed by serine 11. Substrate-binding positions include lysine 43, 53 to 54, and tyrosine 84; that span reads NR. Residues valine 168 and 179–182 contribute to the glutathione site; that span reads WGND.

This sequence belongs to the GST superfamily. NadH family. Requires glutathione as cofactor.

The catalysed reaction is 2-hydroxychromene-2-carboxylate = (3E)-4-(2-hydroxyphenyl)-2-oxobut-3-enoate. Its pathway is aromatic compound metabolism; naphthalene degradation. Involved in the naphthalene catabolic pathway. Catalyzes the reversible glutathione-dependent isomerization of 2-hydroxychromene-2-carboxylate (HCCA) to trans-O-hydroxybenzylidenepyruvate (THBPA). The protein is 2-hydroxychromene-2-carboxylate isomerase (nahD) of Pseudomonas putida (Arthrobacter siderocapsulatus).